The primary structure comprises 55 residues: Large ribosomal subunit protein bL33 (55 aa).

Positions 1 to 11 (MAKSGRDKIKL) are enriched in basic and acidic residues. Positions 1 to 27 (MAKSGRDKIKLESTAGTGHFYTTTKNK) are disordered. Residues 14 to 24 (TAGTGHFYTTT) are compositionally biased toward polar residues.

It belongs to the bacterial ribosomal protein bL33 family.

The chain is Large ribosomal subunit protein bL33 from Herminiimonas arsenicoxydans.